A 373-amino-acid chain; its full sequence is Histidinol-phosphate aminotransferase (373 aa).

Over residues 1 to 10 (MTGVPGSSIT) the composition is skewed to polar residues. The tract at residues 1 to 45 (MTGVPGSSITLDDLPLRDDLRGKSPYGAPQLSVPVRLNTNENPHP) is disordered. An N6-(pyridoxal phosphate)lysine modification is found at lysine 237.

This sequence belongs to the class-II pyridoxal-phosphate-dependent aminotransferase family. Histidinol-phosphate aminotransferase subfamily. Homodimer. Pyridoxal 5'-phosphate serves as cofactor.

It carries out the reaction L-histidinol phosphate + 2-oxoglutarate = 3-(imidazol-4-yl)-2-oxopropyl phosphate + L-glutamate. It participates in amino-acid biosynthesis; L-histidine biosynthesis; L-histidine from 5-phospho-alpha-D-ribose 1-diphosphate: step 7/9. The sequence is that of Histidinol-phosphate aminotransferase from Mycolicibacterium vanbaalenii (strain DSM 7251 / JCM 13017 / BCRC 16820 / KCTC 9966 / NRRL B-24157 / PYR-1) (Mycobacterium vanbaalenii).